We begin with the raw amino-acid sequence, 1097 residues long: Leukemia inhibitory factor receptor (1097 aa).

Positions 1–44 are cleaved as a signal peptide; the sequence is MMDIYVCLKRPSWMVDNKRMRTASNFQWLLSTFILLYLMNQVNS. Over 45–833 the chain is Extracellular; it reads QKKGAPHDLK…SMYVVTKENS (789 aa). In terms of domain architecture, Fibronectin type-III 1 spans 49-138; the sequence is APHDLKCVTN…EQNVSLIPDT (90 aa). 2 disulfides stabilise this stretch: C55/C65 and C82/C90. N-linked (GlcNAc...) asparagine glycosylation is found at N64, N85, N131, N143, N191, N243, and N303. Cysteines 213 and 270 form a disulfide. 5 consecutive Fibronectin type-III domains span residues 335–434, 435–534, 538–629, 627–719, and 724–833; these read TPQQ…VYPH, TPTS…TEAS, GPDT…IPND, PNDD…IGYI, and PIVA…KENS. C341 and C351 are disulfide-bonded. N-linked (GlcNAc...) asparagine glycans are attached at residues N390, N407, N426, N445, N481, and N489. Residues C466 and C511 are joined by a disulfide bond. A WSXWS motif motif is present at residues 519 to 523; sequence WSKWS. 6 N-linked (GlcNAc...) asparagine glycosylation sites follow: N572, N652, N663, N680, N729, and N787. The helical transmembrane segment at 834–858 threads the bilayer; that stretch reads VGLIIAILIPVAVAVIVGVVTSILC. At 859–1097 the chain is on the cytoplasmic side; sequence YRKREWIKET…TNFFQNKPND (239 aa). The Box 1 motif motif lies at 869-877; the sequence is FYPDIPNPE. S927 is modified (phosphoserine). Residues 983-1005 are disordered; it reads PQAKPEEEQENDPVGGAGYKPQM. S1044 carries the phosphoserine modification. The disordered stretch occupies residues 1066 to 1097; sequence RQFLIPPKDEDSPKSNGGGWSFTNFFQNKPND. Over residues 1086-1097 the composition is skewed to polar residues; the sequence is SFTNFFQNKPND.

This sequence belongs to the type I cytokine receptor family. Type 2 subfamily. Heterodimer composed of LIFR and IL6ST. The heterodimer formed by LIFR and IL6ST interacts with the complex formed by CNTF and CNTFR.

The protein localises to the cell membrane. It is found in the secreted. In terms of biological role, signal-transducing molecule. May have a common pathway with IL6ST. The soluble form inhibits the biological activity of LIF by blocking its binding to receptors on target cells. In Homo sapiens (Human), this protein is Leukemia inhibitory factor receptor (LIFR).